A 1331-amino-acid polypeptide reads, in one-letter code: ABC multidrug transporter MDR2 (1331 aa).

A disordered region spans residues 1-50 (MVEPSEKPNTQNDDVSKQEIRNPVSSSSSTSDKEKVAKKGNSDATKSLTP). Positions 31 to 41 (SDKEKVAKKGN) are enriched in basic and acidic residues. A run of 4 helical transmembrane segments spans residues 93-113 (MILL…LPLF), 147-167 (YFVY…VGFI), 219-239 (KVGL…IGYV), and 242-262 (WKLA…MGGI). One can recognise an ABC transmembrane type-1 1 domain in the interval 97-387 (AIVSLASIAA…VAPNTQAFAS (291 aa)). The N-linked (GlcNAc...) asparagine glycan is linked to asparagine 293. The next 2 membrane-spanning stretches (helical) occupy residues 325 to 345 (LGIM…LGFW) and 358 to 378 (LSAI…IGNV). The ABC transporter 1 domain maps to 422–667 (IEFRGIKHIY…KGTYLQLVEA (246 aa)). 457–464 (GPSGSGKS) provides a ligand contact to ATP. Asparagine 529 carries an N-linked (GlcNAc...) asparagine glycan. 2 consecutive transmembrane segments (helical) span residues 762–782 (LCGF…SVFF) and 808–828 (LMFL…GVIF). The ABC transmembrane type-1 2 domain occupies 764–1051 (GFFFAVLSGA…VFSFSPDMGK (288 aa)). N-linked (GlcNAc...) asparagine glycosylation is present at asparagine 860. Transmembrane regions (helical) follow at residues 884 to 904 (LGTI…ALAF), 910 to 930 (LVCI…FWIL), 995 to 1015 (ASQS…GGLL), and 1025 to 1045 (FFLC…VFSF). The ABC transporter 2 domain maps to 1086-1324 (IEFRDVHFRY…KGRYYELVHM (239 aa)). A glycan (N-linked (GlcNAc...) asparagine) is linked at asparagine 1108. 1121–1128 (GPSGCGKS) is an ATP binding site.

The protein belongs to the ABC transporter superfamily. ABCB family. Multidrug resistance exporter (TC 3.A.1.201) subfamily.

The protein resides in the cell membrane. It carries out the reaction itraconazole(in) + ATP + H2O = itraconazole(out) + ADP + phosphate + H(+). Functionally, ABC-type efflux transporter involved in the modulation susceptibility to itraconazole. The polypeptide is ABC multidrug transporter MDR2 (Trichophyton rubrum (strain ATCC MYA-4607 / CBS 118892) (Athlete's foot fungus)).